The chain runs to 451 residues: Glutamyl-tRNA(Gln) amidotransferase subunit D (451 aa).

The interval 78-97 is disordered; sequence PREAPTPGEEEGSQEDFGQP. Residues 99–432 enclose the Asparaginase/glutaminase domain; the sequence is PRVFFVGTGG…EEIQRLFTAN (334 aa). Residues Thr-109, Thr-187, Asp-188, and Lys-266 contribute to the active site.

This sequence belongs to the asparaginase 1 family. GatD subfamily. In terms of assembly, heterodimer of GatD and GatE.

It carries out the reaction L-glutamyl-tRNA(Gln) + L-glutamine + ATP + H2O = L-glutaminyl-tRNA(Gln) + L-glutamate + ADP + phosphate + H(+). Its function is as follows. Allows the formation of correctly charged Gln-tRNA(Gln) through the transamidation of misacylated Glu-tRNA(Gln) in organisms which lack glutaminyl-tRNA synthetase. The reaction takes place in the presence of glutamine and ATP through an activated gamma-phospho-Glu-tRNA(Gln). The GatDE system is specific for glutamate and does not act on aspartate. This chain is Glutamyl-tRNA(Gln) amidotransferase subunit D, found in Thermofilum pendens (strain DSM 2475 / Hrk 5).